Reading from the N-terminus, the 282-residue chain is Bifunctional protein FolD (282 aa).

Residues 164 to 166, Ile189, and Ile230 contribute to the NADP(+) site; that span reads GAS.

This sequence belongs to the tetrahydrofolate dehydrogenase/cyclohydrolase family. Homodimer.

It catalyses the reaction (6R)-5,10-methylene-5,6,7,8-tetrahydrofolate + NADP(+) = (6R)-5,10-methenyltetrahydrofolate + NADPH. It carries out the reaction (6R)-5,10-methenyltetrahydrofolate + H2O = (6R)-10-formyltetrahydrofolate + H(+). The protein operates within one-carbon metabolism; tetrahydrofolate interconversion. In terms of biological role, catalyzes the oxidation of 5,10-methylenetetrahydrofolate to 5,10-methenyltetrahydrofolate and then the hydrolysis of 5,10-methenyltetrahydrofolate to 10-formyltetrahydrofolate. The sequence is that of Bifunctional protein FolD from Campylobacter jejuni (strain RM1221).